Here is a 350-residue protein sequence, read N- to C-terminus: Ion-translocating oxidoreductase complex subunit D (350 aa).

A run of 4 helical transmembrane segments spans residues Val20–Gly40, Gly42–Leu62, Leu89–Ala109, and Pro120–Thr140. Thr178 is modified (FMN phosphoryl threonine). 5 helical membrane passes run Leu204 to Ile224, Ile228 to Phe248, Tyr255 to Ala275, Ala282 to Ile302, and Gly306 to Ile326.

Belongs to the NqrB/RnfD family. The complex is composed of six subunits: RnfA, RnfB, RnfC, RnfD, RnfE and RnfG. Requires FMN as cofactor.

It is found in the cell inner membrane. Functionally, part of a membrane-bound complex that couples electron transfer with translocation of ions across the membrane. The polypeptide is Ion-translocating oxidoreductase complex subunit D (Marinobacter nauticus (strain ATCC 700491 / DSM 11845 / VT8) (Marinobacter aquaeolei)).